A 234-amino-acid chain; its full sequence is Opacity protein opA51 (234 aa).

A signal peptide is located at residue Ala-1.

This sequence belongs to the opacity porin family.

The protein resides in the cell outer membrane. Implicated in a number of adherence functions. OPA proteins are implicated in pathogenesis and are subject to phase variation. In Neisseria gonorrhoeae, this protein is Opacity protein opA51 (opaB).